Reading from the N-terminus, the 353-residue chain is Ubiquinol oxidase 1, mitochondrial (353 aa).

Residues 1-69 constitute a mitochondrion transit peptide; it reads MMTRGATRMT…RHFPVMGSRS (69 aa). Residues 77–99 are disordered; sequence DKQHDKKAENGSAAATGGGDGGD. A helical membrane pass occupies residues 178–198; that stretch reads AMMLETVAAVPGMVGGMLLHC. Positions 182, 221, and 224 each coordinate Fe cation. The helical transmembrane segment at 240 to 260 threads the bilayer; it reads ALVFAVQGVFFNAYFVTYLLS. The Fe cation site is built by E272, E323, and H326.

It belongs to the alternative oxidase family. Homodimer; disulfide-linked. Requires Fe cation as cofactor.

It is found in the mitochondrion inner membrane. The catalysed reaction is 2 a ubiquinol + O2 = 2 a ubiquinone + 2 H2O. With respect to regulation, stimulated by reduction of the disulfide bond and the presence of pyruvate. Its function is as follows. Catalyzes the cyanide-resistant oxidation of ubiquinol and the reduction of molecular oxygen to water, but does not translocate protons and consequently is not linked to oxidative phosphorylation. May increase respiration when the cytochrome respiratory pathway is restricted, or in response to low temperatures. This is Ubiquinol oxidase 1, mitochondrial (AOX1) from Nicotiana tabacum (Common tobacco).